The sequence spans 224 residues: Serum amyloid P-component (224 aa).

An N-terminal signal peptide occupies residues 1–20 (MDKLLLWMFVFTSLLSEAFC). One can recognise a Pentraxin (PTX) domain in the interval 25–224 (KRKVFVFPRE…YVVIRPRVWD (200 aa)). N-linked (GlcNAc...) asparagine glycosylation is present at N52. C56 and C115 are disulfide-bonded. Residues D78, N79, E156, Q157, D158, and Q168 each coordinate Ca(2+).

It belongs to the pentraxin family. In terms of assembly, homopentamer. Pentraxin (or pentaxin) have a discoid arrangement of 5 non-covalently bound subunits. Requires Ca(2+) as cofactor.

The protein localises to the secreted. This chain is Serum amyloid P-component (Apcs), found in Mus musculus (Mouse).